The following is a 391-amino-acid chain: Homocysteine-responsive endoplasmic reticulum-resident ubiquitin-like domain member 1 protein (391 aa).

N-acetylmethionine is present on M1. The Cytoplasmic segment spans residues 1–263 (MEPEPQPEPV…VEEDDEINRD (263 aa)). A Ubiquitin-like domain is found at 10–72 (VTLLVKSPNQ…LLDHQCLQDL (63 aa)). The interval 90 to 126 (NPSKMPETSTKGAESTEQPDNSNQTQHPGDSSSDGLR) is disordered. Over residues 95-124 (PETSTKGAESTEQPDNSNQTQHPGDSSSDG) the composition is skewed to polar residues. The tract at residues 115–200 (QHPGDSSSDG…ASGTFVPTPS (86 aa)) is interaction with UBQLN1. The residue at position 135 (S135) is a Phosphoserine. The chain crosses the membrane as a helical span at residues 264–284 (WLDWTYSAATFSVFLSILYFY). The Lumenal segment spans residues 285 to 289 (SSLSR). The helical transmembrane segment at 290-310 (FLMVMGATVVMYLHHVGWFPF) threads the bilayer. The Cytoplasmic portion of the chain corresponds to 311–391 (RQRPVQNFPD…LPEGPPALAN (81 aa)). The disordered stretch occupies residues 317 to 361 (NFPDDGGPRDAANQDPNNNLQGGMDPEMEDPNRLPPDREVLDPEH). Positions 346-361 (DPNRLPPDREVLDPEH) are enriched in basic and acidic residues.

Interacts with PSEN1 and PSEN2. Interacts with UBXN6. Interacts with UBQLN1, UBQLN2 and UBQLN4. Component of the HRD1 complex, which comprises at least SYNV1/HRD1, FAM8A1, HERPUD1/HERP, OS9, SEL1L and UBE2J1. FAM8A1 binding to SYNV1 may promote recruitment of HERPUD1 to the HRD1 complex.

It localises to the endoplasmic reticulum membrane. Functionally, component of the endoplasmic reticulum quality control (ERQC) system also called ER-associated degradation (ERAD) involved in ubiquitin-dependent degradation of misfolded endoplasmic reticulum proteins. Binds to ubiquilins and this interaction is required for efficient degradation of CD3D via the ERAD pathway. The polypeptide is Homocysteine-responsive endoplasmic reticulum-resident ubiquitin-like domain member 1 protein (Herpud1) (Mus musculus (Mouse)).